We begin with the raw amino-acid sequence, 501 residues long: MIRSVRRVFIYVSIFVLIIVLKRTLSGTDQTSMKQPVVVIGSGLAGLTTSNRLISKYRIPVVLLDKAASIGGNSIKASSGINGAHTDTQQNLKVMDTPELFLKDTLHSAKGRGVPSLMDKLTKESKSAIRWLQTEFDLKLDLLAQLGGHSVPRTHRSSGKLPPGFEIVQALSKKLKDISSKDSNLVQIMLNSEVVDIELDNQGHVTGVVYMDENGNRKIMKSHHVVFCSGGFGYSKEMLKEYSPNLIHLPTTNGKQTTGDGQKILSKLGAELIDMDQVQVHPTGFIDPNDRENNWKFLAAEALRGLGGILLHPTTGRRFTNELSTRDTVTMEIQSKCPKNDNRALLVMSDKVYENYTNNINFYMSKNLIKKVSINDLIRQYDLQTTASELVTELKSYSDVNTKDTFDRPLIINAFDKDISTESTVYVGEVTPVVHFTMGGVKINEKSQVIKKNSESVLSNGIFAAGEVSGGVHGANRLGGSSLLECVVFGKTAADNIAKLY.

A mitochondrion-targeting transit peptide spans 1-32; the sequence is MIRSVRRVFIYVSIFVLIIVLKRTLSGTDQTS. 37–51 serves as a coordination point for FAD; the sequence is VVVIGSGLAGLTTSN. Catalysis depends on residues H281 and R304.

It belongs to the FAD-dependent oxidoreductase 2 family. FRD/SDH subfamily. It depends on FAD as a cofactor.

It is found in the mitochondrion. The enzyme catalyses succinate + NAD(+) = fumarate + NADH + H(+). In terms of biological role, irreversibly catalyzes the reduction of fumarate to succinate. Together with the second isozyme of soluble fumarate reductase (FRD1), essential for anaerobic growth. Involved in maintaining redox balance during oxygen deficiency conditions. Reduction of fumarate is the main source of succinate during fermentation, and under anaerobic conditions, the formation of succinate is strictly required for the reoxidation of FADH(2). The chain is Fumarate reductase 2 (OSM1) from Saccharomyces cerevisiae (strain ATCC 204508 / S288c) (Baker's yeast).